We begin with the raw amino-acid sequence, 119 residues long: Large ribosomal subunit protein bL20 (119 aa).

Belongs to the bacterial ribosomal protein bL20 family.

Its function is as follows. Binds directly to 23S ribosomal RNA and is necessary for the in vitro assembly process of the 50S ribosomal subunit. It is not involved in the protein synthesizing functions of that subunit. The protein is Large ribosomal subunit protein bL20 of Nitrosospira multiformis (strain ATCC 25196 / NCIMB 11849 / C 71).